Reading from the N-terminus, the 761-residue chain is NADP-dependent malic enzyme (761 aa).

The segment at Met-1–Ala-437 is malic enzyme. Tyr-49 acts as the Proton donor in catalysis. Lys-104 acts as the Proton acceptor in catalysis. 3 residues coordinate a divalent metal cation: Glu-146, Asp-147, and Asp-172. Residues Ala-205–Ala-208, Asn-297, and Asn-329 each bind NADP(+). The tract at residues Ser-438–Thr-761 is phosphate acetyltransferase.

It in the N-terminal section; belongs to the malic enzymes family. This sequence in the C-terminal section; belongs to the phosphate acetyltransferase and butyryltransferase family. Homooctamer. Requires Mg(2+) as cofactor. It depends on Mn(2+) as a cofactor.

It catalyses the reaction (S)-malate + NADP(+) = pyruvate + CO2 + NADPH. The catalysed reaction is oxaloacetate + H(+) = pyruvate + CO2. The protein is NADP-dependent malic enzyme (tme) of Rhizobium meliloti (strain 1021) (Ensifer meliloti).